The chain runs to 550 residues: Sterol O-acyltransferase 1 (550 aa).

Met-1 bears the N-acetylmethionine mark. The segment at 1–36 (MVGEEKMSLRNRLSKSRENPEEDEDQRKPAKESLEA) is disordered. Residues 1 to 138 (MVGEEKMSLR…LDELLEVDHI (138 aa)) are Cytoplasmic-facing. Ser-8 is modified (phosphoserine). Residues 15 to 34 (KSRENPEEDEDQRKPAKESL) show a composition bias toward basic and acidic residues. His-137 contributes to the cholesterol binding site. The helical transmembrane segment at 139–160 (RTIYHMFIALLILFILSTLVVD) threads the bilayer. The Lumenal portion of the chain corresponds to 161 to 180 (YIDEGRLVLEFSLLSYAFGK). A helical membrane pass occupies residues 181 to 206 (FPTVVWTWWIMFLSTFSVPYFLFQRW). The Cytoplasmic portion of the chain corresponds to 207-218 (ATGYSKSSHPLI). The helical transmembrane segment at 219 to 244 (NSLFHGFLFMVFQIGILGFGPTYVVL) threads the bilayer. Over 245–252 (AYTLPPAS) the chain is Lumenal. The chain crosses the membrane as a helical span at residues 253–276 (RFIIIFEQIRFVMKAHSFVRENVP). Over 277–319 (RVLNSAKEKSSTVPIPTVNQYLYFLFAPTLIYRDSYPRNPTVR) the chain is Cytoplasmic. Residues 320–352 (WGYVAMQFAQVFGCFFYVYYIFERLCAPLFRNI) form a helical membrane-spanning segment. At 353-369 (KQEPFSARVLVLCVFNS) the chain is on the lumenal side. Residues 370–395 (ILPGVLILFLTFFAFLHCWLNAFAEM) form a helical membrane-spanning segment. At 396-443 (LRFGDRMFYKDWWNSTSYSNYYRTWNVVVHDWLYYYAYKDFLWFFSKR) the chain is on the cytoplasmic side. Residues 403–409 (FYKDWWN) carry the FYXDWWN motif motif. The an acyl-CoA site is built by Asn-415, Arg-418, Asn-421, His-425, Tyr-433, Lys-445, and Ser-456. Residues 444–468 (FKSAAMLAAFAVSAVVHEYALAVCL) form a helical membrane-spanning segment. His-460 is a catalytic residue. The Lumenal portion of the chain corresponds to 469–474 (SFFYPV). Residues 475 to 490 (LFVLFMFFGMAFNFIV) form a helical membrane-spanning segment. The Cytoplasmic segment spans residues 491–496 (NDSRKK). A helical membrane pass occupies residues 497–528 (PIWNVMMWTSLFLGNGVLLCFYSQEWYARQHC). Cysteines 528 and 546 form a disulfide. Residues 529-550 (PLKNPTFLDYVRPRSWTCRYVF) are Lumenal-facing.

It belongs to the membrane-bound acyltransferase family. Sterol o-acyltransferase subfamily. In terms of assembly, may form homo- or heterodimers. Interacts with UBIAD1. Expressed in most tissues, but most strongly in the adrenal gland. Expressed more strongly in liver Kupffer cells than in hepatocytes.

It is found in the endoplasmic reticulum membrane. The enzyme catalyses a sterol + a long-chain fatty acyl-CoA = a long-chain 3-hydroxysterol ester + CoA. The catalysed reaction is cholesterol + an acyl-CoA = a cholesterol ester + CoA. It carries out the reaction cholesterol + (9Z)-octadecenoyl-CoA = cholesteryl (9Z-octadecenoate) + CoA. It catalyses the reaction cholesterol + hexadecanoyl-CoA = cholesteryl hexadecanoate + CoA. The enzyme catalyses octadecanoyl-CoA + cholesterol = cholesteryl octadecanoate + CoA. The catalysed reaction is (9Z,12Z)-octadecadienoyl-CoA + cholesterol = cholesteryl (9Z,12Z)-octadecadienoate + CoA. It carries out the reaction (5Z,8Z,11Z,14Z)-eicosatetraenoyl-CoA + cholesterol = cholesteryl (5Z,8Z,11Z,14Z)-eicosatetraenoate + CoA. It catalyses the reaction (9Z)-hexadecenoyl-CoA + cholesterol = cholesteryl (9Z)-hexadecenoate + CoA. The enzyme catalyses (11Z)-octadecenoyl-CoA + cholesterol = cholesteryl (11Z)-octadecenoate + CoA. The catalysed reaction is (7Z)-octadecenoyl-CoA + cholesterol = cholesteryl (7Z)-octadecenoate + CoA. Catalyzes the formation of fatty acid-cholesterol esters, which are less soluble in membranes than cholesterol. Plays a role in lipoprotein assembly and dietary cholesterol absorption. Preferentially utilizes oleoyl-CoA ((9Z)-octadecenoyl-CoA) as a substrate: shows a higher activity towards an acyl-CoA substrate with a double bond at the delta-9 position (9Z) than towards saturated acyl-CoA or an unsaturated acyl-CoA with a double bond at the delta-7 (7Z) or delta-11 (11Z) positions. The sequence is that of Sterol O-acyltransferase 1 (SOAT1) from Macaca fascicularis (Crab-eating macaque).